Consider the following 82-residue polypeptide: U-scoloptoxin(21)-Sm3a (82 aa).

The first 21 residues, 1-21 (MKIIALLLMVFLDFIIVNXAE), serve as a signal peptide directing secretion.

The protein belongs to the scoloptoxin-21 family. Expressed by the venom gland.

The protein resides in the secreted. This is U-scoloptoxin(21)-Sm3a from Scolopendra morsitans (Tanzanian blue ringleg centipede).